A 504-amino-acid polypeptide reads, in one-letter code: Anaerobic nitric oxide reductase transcription regulator NorR (504 aa).

The residue at position 57 (D57) is a 4-aspartylphosphate. One can recognise a Sigma-54 factor interaction domain in the interval 187-416; that stretch reads MIGLSPGMTQ…LEHAIHRAVV (230 aa). Residues 215–222 and 278–287 each bind ATP; these read GETGTGKE and ADNGTLFLDE. Residues 479 to 498 constitute a DNA-binding region (H-T-H motif); the sequence is WAACARMLETDVANLHRLAK.

The protein operates within nitrogen metabolism; nitric oxide reduction. Its function is as follows. Required for the expression of anaerobic nitric oxide (NO) reductase, acts as a transcriptional activator for at least the norVW operon. Activation also requires sigma-54. This Escherichia coli O17:K52:H18 (strain UMN026 / ExPEC) protein is Anaerobic nitric oxide reductase transcription regulator NorR.